Here is a 579-residue protein sequence, read N- to C-terminus: 6-deoxy-6-sulfo-D-gluconate dehydratase (579 aa).

[4Fe-4S] cluster-binding residues include C59, C127, and C200.

The protein belongs to the IlvD/Edd family. Homodimer. It depends on [4Fe-4S] cluster as a cofactor.

It carries out the reaction 6-deoxy-6-sulfo-D-gluconate = 2-dehydro-3,6-dideoxy-6-sulfo-D-gluconate + H2O. Its function is as follows. Catalyzes the dehydration of 6-deoxy-6-sulfo-D-gluconate to 2-dehydro-3,6-dideoxy-6-sulfo-D-gluconate. Is involved in a degradation pathway of sulfoquinovose (SQ) that allows P.putida SQ1 to use SQ as the sole carbon and energy source for growth. This chain is 6-deoxy-6-sulfo-D-gluconate dehydratase, found in Pseudomonas putida (Arthrobacter siderocapsulatus).